The chain runs to 416 residues: Gamma-glutamyl phosphate reductase (416 aa).

It belongs to the gamma-glutamyl phosphate reductase family.

It is found in the cytoplasm. The enzyme catalyses L-glutamate 5-semialdehyde + phosphate + NADP(+) = L-glutamyl 5-phosphate + NADPH + H(+). Its pathway is amino-acid biosynthesis; L-proline biosynthesis; L-glutamate 5-semialdehyde from L-glutamate: step 2/2. Its function is as follows. Catalyzes the NADPH-dependent reduction of L-glutamate 5-phosphate into L-glutamate 5-semialdehyde and phosphate. The product spontaneously undergoes cyclization to form 1-pyrroline-5-carboxylate. This is Gamma-glutamyl phosphate reductase from Salmonella schwarzengrund (strain CVM19633).